Here is a 401-residue protein sequence, read N- to C-terminus: Probable cysteine desulfurase (401 aa).

Lys223 is subject to N6-(pyridoxal phosphate)lysine.

Belongs to the class-V pyridoxal-phosphate-dependent aminotransferase family. Csd subfamily. It depends on pyridoxal 5'-phosphate as a cofactor.

The enzyme catalyses (sulfur carrier)-H + L-cysteine = (sulfur carrier)-SH + L-alanine. In terms of biological role, catalyzes the removal of elemental sulfur and selenium atoms from L-cysteine, L-cystine, L-selenocysteine, and L-selenocystine to produce L-alanine. The chain is Probable cysteine desulfurase (csd) from Pseudomonas aeruginosa (strain ATCC 15692 / DSM 22644 / CIP 104116 / JCM 14847 / LMG 12228 / 1C / PRS 101 / PAO1).